Here is a 134-residue protein sequence, read N- to C-terminus: ATP synthase epsilon chain (134 aa).

This sequence belongs to the ATPase epsilon chain family. In terms of assembly, F-type ATPases have 2 components, CF(1) - the catalytic core - and CF(0) - the membrane proton channel. CF(1) has five subunits: alpha(3), beta(3), gamma(1), delta(1), epsilon(1). CF(0) has three main subunits: a, b and c.

Its subcellular location is the cell membrane. In terms of biological role, produces ATP from ADP in the presence of a proton gradient across the membrane. The polypeptide is ATP synthase epsilon chain (Listeria welshimeri serovar 6b (strain ATCC 35897 / DSM 20650 / CCUG 15529 / CIP 8149 / NCTC 11857 / SLCC 5334 / V8)).